A 1041-amino-acid chain; its full sequence is Leucine-rich repeat receptor-like protein kinase TDR (1041 aa).

An N-terminal signal peptide occupies residues 1 to 29 (MKKKNISPSLVLHPLLLLLLPFFAFNSLA). The Extracellular portion of the chain corresponds to 30–652 (LKFSPQLLSL…HHKEERPKKT (623 aa)). An intrachain disulfide couples cysteine 69 to cysteine 76. Asparagine 78, asparagine 92, and asparagine 111 each carry an N-linked (GlcNAc...) asparagine glycan. LRR repeat units lie at residues 80 to 104 (TAQV…IRYL), 105 to 128 (SSLL…IFDL), 130 to 152 (KLTT…ISKL), 154 to 176 (FLKV…VSRL), 177 to 199 (RFLE…AYGG), 200 to 224 (LQRL…LGLL), 225 to 248 (TELQ…FALL), 250 to 272 (NLKY…LGNL), 273 to 296 (SNLE…YSNL), 297 to 319 (KSLK…GFST), 321 to 344 (KNLT…IGEL), 345 to 368 (PELT…LGSN), 369 to 392 (GKLE…LCHG), 394 to 416 (KLYK…LTRC), 418 to 439 (SLWR…GFGS), 440 to 464 (LRNL…FATA), 466 to 488 (VLQY…IWKA), 511 to 535 (CKSF…IGHC), 536 to 558 (EKLL…EIST), 559 to 583 (LPSI…FGSS), and 585 to 607 (TITT…SFAH). A CLE peptide binding region spans residues 186 to 188 (GSY). A CLE peptide binding region spans residues 233-235 (GYN). N-linked (GlcNAc...) asparagine glycans are attached at residues asparagine 258 and asparagine 271. Positions 303-307 (DFSSN) are CLE peptide binding. Asparagine 322, asparagine 332, and asparagine 356 each carry an N-linked (GlcNAc...) asparagine glycan. Residues 375 to 377 (DVS) form a CLE peptide binding region. A glycan (N-linked (GlcNAc...) asparagine) is linked at asparagine 378. The cysteines at positions 390 and 416 are disulfide-linked. The interval 421-423 (RFR) is CLE peptide binding. 5 N-linked (GlcNAc...) asparagine glycosylation sites follow: asparagine 430, asparagine 442, asparagine 471, asparagine 525, and asparagine 542. A disulfide bond links cysteine 511 and cysteine 535. A glycan (N-linked (GlcNAc...) asparagine) is linked at asparagine 590. Cysteine 620 and cysteine 628 are joined by a disulfide. A helical transmembrane segment spans residues 653-673 (AGAIVWILAAAIGVGFFVLVA). At 674-1041 (ATRCFQKSYG…HDVKCQRIGV (368 aa)) the chain is on the cytoplasmic side. Threonine 710 carries the post-translational modification Phosphothreonine. Residues 719–1001 (SKTDNILGMG…DVLLILQEAK (283 aa)) enclose the Protein kinase domain. ATP is bound by residues 725 to 733 (LGMGSTGTV) and lysine 747. Tyrosine 798 and tyrosine 839 each carry phosphotyrosine. Aspartate 852 (proton acceptor) is an active-site residue. Position 884 is a phosphoserine (serine 884). A phosphotyrosine mark is found at tyrosine 892 and tyrosine 899. Phosphothreonine is present on threonine 900.

This sequence belongs to the protein kinase superfamily. Ser/Thr protein kinase family. Interacts specifically with the mature peptides CLE41p and CLE44p, especially in the presence of SERK2. Interacts with LURE1.2. In terms of tissue distribution, widely expressed along the vascular strands. In roots and hypocotyls, confined to procambial cells.

The protein resides in the cell membrane. It carries out the reaction L-seryl-[protein] + ATP = O-phospho-L-seryl-[protein] + ADP + H(+). The enzyme catalyses L-threonyl-[protein] + ATP = O-phospho-L-threonyl-[protein] + ADP + H(+). In terms of biological role, acts with CLE41p and CLE44p peptides as a ligand-receptor pair in a signal transduction pathway involved in the regulation of procambium maintenance and polarity during vascular-tissue development. Mediates repression of tracheary element differentiation and the promotion of procambial cells formation and polar division adjacent to phloem cells in the veins. This Arabidopsis thaliana (Mouse-ear cress) protein is Leucine-rich repeat receptor-like protein kinase TDR.